Consider the following 75-residue polypeptide: ATP synthase subunit epsilon, mitochondrial (75 aa).

The transit peptide at 1-9 (MIRRSCALL) directs the protein to the mitochondrion.

It belongs to the eukaryotic ATPase epsilon family. F-type ATPases have 2 components, F(1) - the catalytic core - and F(o) - the membrane proton channel. F(1) has five subunits: alpha(3), beta(3), gamma(1), delta(1), epsilon(1), plus the additional subunit P18 (Tb427.05.1710) that is not present in F(1)F(o) ATP synthase from metazoa. Subunit P18 (Tb927.5.1710) interacts with the alpha subunit with a 1:1 stoichiometry; the interaction is direct. Subunit gamma is part of the central stalk. F(o) has three main subunits: a, b and c. The trypanosomal ATPase complex contains additional subunits that are not present in the F(1)F(o) ATP synthase from metazoa.

The protein localises to the mitochondrion. It is found in the mitochondrion inner membrane. Functionally, mitochondrial membrane ATP synthase (F(1)F(o) ATP synthase) produces ATP from ADP in the presence of a proton gradient across the membrane which is generated by electron transport complexes of the respiratory chain. F-type ATPases consist of two structural domains, F(1) - containing the extramembraneous catalytic core, and F(o) - containing the membrane proton channel, linked together by a central stalk and a peripheral stalk. During catalysis, ATP synthesis in the catalytic domain of F(1) is coupled via a rotary mechanism of the central stalk subunits to proton translocation. Subunits alpha and beta form the catalytic core in F(1). Rotation of the central stalk against the surrounding alpha(3)beta(3) subunits leads to hydrolysis of ATP in three separate catalytic sites on the beta subunits. Contrary to the procyclic, insect form that requires F(1)F(o) ATP synthase for ATP synthesis, the bloodstream form relies on ATP hydrolysis by F(1)F(o) ATP synthase to maintain its mitochondrial membrane potential. This Trypanosoma brucei brucei protein is ATP synthase subunit epsilon, mitochondrial.